Here is a 485-residue protein sequence, read N- to C-terminus: Zinc finger protein 639 (485 aa).

Residues Met1 to His14 are compositionally biased toward basic residues. Residues Met1 to Asp20 are disordered. Ser60 is modified (phosphoserine). Lys76 participates in a covalent cross-link: Glycyl lysine isopeptide (Lys-Gly) (interchain with G-Cter in SUMO2). Position 88 is a phosphoserine (Ser88). Glycyl lysine isopeptide (Lys-Gly) (interchain with G-Cter in SUMO2) cross-links involve residues Lys177, Lys181, and Lys226. 8 C2H2-type zinc fingers span residues Tyr204 to His227, Asn233 to His255, Tyr260 to His283, Tyr289 to His311, Phe374 to His397, His403 to His425, Tyr431 to His454, and His460 to His482. The tract at residues Lys371 to Ser455 is interaction with CTNNA2.

It belongs to the krueppel C2H2-type zinc-finger protein family. Interacts with CTNNA2.

It localises to the nucleus. Functionally, binds DNA and may function as a transcriptional repressor. The sequence is that of Zinc finger protein 639 (ZNF639) from Bos taurus (Bovine).